Here is a 562-residue protein sequence, read N- to C-terminus: Efflux pump apf11 (562 aa).

Composition is skewed to low complexity over residues 1-10 (MGDISAATKA) and 18-30 (TPETNTTSSSSDT). Residues 1-36 (MGDISAATKAPAPPTPATPETNTTSSSSDTDVQHEP) form a disordered region. A glycan (N-linked (GlcNAc...) asparagine) is linked at Asn-22. The next 8 membrane-spanning stretches (helical) occupy residues 46–66 (LVIFALGLAILVGVLDATIVA), 83–103 (AWYGSAYLLVTGATQPIFGKI), 110–130 (KLVFLSSVAILEVGSLVCALA), 141–161 (AIAGLGAAGVISGGLIITALT), 169–189 (VYTAILGSLEGVGVIIGPIIG), 200–220 (WCFWINLPIGAVLCAILVFCL), 249–269 (GGLAIAGSITCLLLALEWGGT), and 278–298 (IIVLLVVFGVSLICVAVHQHW). Asn-312 carries N-linked (GlcNAc...) asparagine glycosylation. 6 helical membrane passes run 317 to 337 (MFLLCGLCFAGAQFTVLYYLP), 356 to 376 (LAMVVSVIVVSVIAGGSAGAV), 382 to 404 (FVFFATIFSSIGAGMLYTLHPSI), 414 to 434 (ILFGAGSGTGIQQAIVGVQVA), 447 to 467 (VMLVNTLAGSIFIAVSQTLFL), and 516 to 536 (FLIGLVLCSITVLTWPLIRWI).

The protein belongs to the major facilitator superfamily. TCR/Tet family.

The protein localises to the membrane. It participates in secondary metabolite biosynthesis. Efflux pump; part of the gene cluster that mediates the biosynthesis of the cyclic tetrapeptide apicidin F (APF). In Gibberella fujikuroi (strain CBS 195.34 / IMI 58289 / NRRL A-6831) (Bakanae and foot rot disease fungus), this protein is Efflux pump apf11 (apf11).